Here is a 157-residue protein sequence, read N- to C-terminus: Ribonuclease H (157 aa).

The RNase H type-1 domain occupies 1 to 146; that stretch reads MPDLVAYTDG…ADELARAGMA (146 aa). The Mg(2+) site is built by Asp9, Glu52, Asp74, and Asp138.

It belongs to the RNase H family. As to quaternary structure, monomer. Mg(2+) serves as cofactor.

It localises to the cytoplasm. The enzyme catalyses Endonucleolytic cleavage to 5'-phosphomonoester.. Its function is as follows. Endonuclease that specifically degrades the RNA of RNA-DNA hybrids. This chain is Ribonuclease H, found in Jannaschia sp. (strain CCS1).